Here is a 176-residue protein sequence, read N- to C-terminus: ATP-dependent protease subunit HslV (176 aa).

Threonine 6 is an active-site residue. Na(+) contacts are provided by serine 161, cysteine 164, and threonine 167.

Belongs to the peptidase T1B family. HslV subfamily. A double ring-shaped homohexamer of HslV is capped on each side by a ring-shaped HslU homohexamer. The assembly of the HslU/HslV complex is dependent on binding of ATP.

The protein localises to the cytoplasm. The catalysed reaction is ATP-dependent cleavage of peptide bonds with broad specificity.. Allosterically activated by HslU binding. In terms of biological role, protease subunit of a proteasome-like degradation complex believed to be a general protein degrading machinery. This chain is ATP-dependent protease subunit HslV, found in Aquifex aeolicus (strain VF5).